The chain runs to 85 residues: RNA-binding protein Hfq (85 aa).

The 60-residue stretch at 9–68 folds into the Sm domain; that stretch reads DPFLNALRRERVPVSIYLVNGIKLQGQVESFDQFVILLKNTVSQMVYKHAISTVVPARPF.

Belongs to the Hfq family. As to quaternary structure, homohexamer.

RNA chaperone that binds small regulatory RNA (sRNAs) and mRNAs to facilitate mRNA translational regulation in response to envelope stress, environmental stress and changes in metabolite concentrations. Also binds with high specificity to tRNAs. This chain is RNA-binding protein Hfq, found in Shewanella frigidimarina (strain NCIMB 400).